We begin with the raw amino-acid sequence, 1301 residues long: ABC transporter BEA3 (1301 aa).

The tract at residues Met1–Lys30 is disordered. Residues Gly15 to Lys30 show a composition bias toward basic and acidic residues. The next 4 membrane-spanning stretches (helical) occupy residues Val54–Gly74, Leu103–Phe123, Leu177–Tyr197, and Leu203–Ile223. Positions Val54–Lys345 constitute an ABC transmembrane type-1 1 domain. Residue Asn229 is glycosylated (N-linked (GlcNAc...) asparagine). Helical transmembrane passes span Phe281–Phe301 and Ile313–Met333. In terms of domain architecture, ABC transporter 1 spans Ile378–Asn667. Gly413–Ser420 contributes to the ATP binding site. Residues Val442–Lys454 show a composition bias toward basic and acidic residues. Residues Val442–Leu461 are disordered. N-linked (GlcNAc...) asparagine glycosylation is found at Asn511 and Asn618. Residues Val682–Glu708 form a disordered region. An ABC transmembrane type-1 2 domain is found at Ala735–Gln1024. The next 6 membrane-spanning stretches (helical) occupy residues Gly745–Leu765, Ser779–Leu799, Ser858–Trp878, Leu880–Met900, Trp961–Leu981, and Leu987–Asn1007. In terms of domain architecture, ABC transporter 2 spans Ile1060 to Ser1296. Gly1094–Ser1101 serves as a coordination point for ATP.

This sequence belongs to the ABC transporter superfamily. ABCB family. Multidrug resistance exporter (TC 3.A.1.201) subfamily.

The protein localises to the cell membrane. In terms of biological role, ABC transporter; part of the gene cluster that mediates the biosynthesis of beauvericin (BEA), a non-ribosomal cyclic hexadepsipeptide that shows antibiotic, antifungal, insecticidal, and cancer cell antiproliferative and antihaptotactic activity. Functions as a regulator of beauvericin production, rather than in BEA transport out of the cell. Beauvericin has low toxicity to the producing fungus and BEA3 does not play a role in detoxification and self-protection of the producing fungus. The polypeptide is ABC transporter BEA3 (Gibberella fujikuroi (strain CBS 195.34 / IMI 58289 / NRRL A-6831) (Bakanae and foot rot disease fungus)).